A 467-amino-acid polypeptide reads, in one-letter code: UDP-glycosyltransferase 90A2 (467 aa).

Residues Ser289, 341–343 (VDQ), 358–366 (HCGWNSLTE), and 380–383 (AAEQ) contribute to the UDP-alpha-D-glucose site.

Belongs to the UDP-glycosyltransferase family.

The chain is UDP-glycosyltransferase 90A2 (UGT90A2) from Arabidopsis thaliana (Mouse-ear cress).